The following is a 676-amino-acid chain: MAPPAAAPELGSCCICLDAITGAARALPCLHAFCLACIRRWLEGRPTCPLCKAPVQSLIHSVASDECFEEIPVGGGPGADGALEPDAAVIWGEDYDAGPIDLTAADGEAPGAGGEAGAAGGSEAGGGAGGAEAAGEARGAGAGRAAGAAGGRAGRGADAAQEFIDRVARGPRLPLLPNTPGHGPGAPYLRRVVEWVEGALVGTFAVTARELAAMTDYVMAMLAECGFDDDGLADAMEPLIGEDDAPAFVRSLLFVAARCVTVGPSHLIPQQSAPPGGRGVVFLDTSDSDSEGSEDDSWSESEESSSGLSTSDLTAIDDTETEPETDAEVESRRTRGASGAARARRPAERQYVSTRGRQTPAVQPAPRSLARRPCGRAAAVSAPPSSRSRGGRRDPRLPAAPRAAPAAQARACSPEPREEGRGAGLGVAAGETAGWGVGSEEGRGERRAKLLGEAGPPRVQARRRRRTELDRAPTPAPAPAPAPAPISTMIDLTANAPARPADPAPAAALGPALAGAQIGTPAAAAAVTAAAAAPSVARGSAPSPAVTAAATGTAAAISTRAPTPSPAGRAPAADPRRAGAPALAGAARAEAGRNGNPGRERRPASAMARGDLDPGPESSAQKRRRTEMEVAAWVRESLLGTPRRSSAALAPQPGGRQGPSLAGLLGRCSGGSAWRQ.

Residues Cys13–Lys52 form an RING-type zinc finger. 3 disordered regions span residues Asp101–Gly135, His266–Ile486, and Ala555–Gln676. Residues Pro110–Gly135 show a composition bias toward gly residues. The span at Ser286 to Glu303 shows a compositional bias: acidic residues. Positions Ser304 to Thr314 are enriched in low complexity. Positions Ala315 to Glu328 are enriched in acidic residues. The segment covering Tyr351 to Ala361 has biased composition (polar residues). Low complexity-rich tracts occupy residues Gly375–Ser388 and Leu397–Ala411. Residues Gly422–Ser439 show a composition bias toward gly residues. Over residues Glu440 to Leu450 the composition is skewed to basic and acidic residues. Positions Thr474–Ala484 are enriched in pro residues. The span at Ala555–Pro597 shows a compositional bias: low complexity.

Auto-ubiquitinated. In terms of processing, the strongly acidic region might serve as a transcriptional activation domain, possibly regulated through phosphorylation by casein kinase II.

It catalyses the reaction S-ubiquitinyl-[E2 ubiquitin-conjugating enzyme]-L-cysteine + [acceptor protein]-L-lysine = [E2 ubiquitin-conjugating enzyme]-L-cysteine + N(6)-ubiquitinyl-[acceptor protein]-L-lysine.. Functionally, evades nuclear antiviral defenses triggered by dsDNA viruses. Acts during the initial stages of lytic infection and the reactivation of latent viral genome. Prevents the antiviral effect of nuclear bodies by degrading host PML and SP100. In Bos taurus (Bovine), this protein is E3 ubiquitin-protein ligase ICP0 (BICP0).